A 377-amino-acid polypeptide reads, in one-letter code: Alanine racemase, catabolic (377 aa).

The active-site Proton acceptor; specific for D-alanine is Lys-51. Lys-51 is modified (N6-(pyridoxal phosphate)lysine). A substrate-binding site is contributed by Arg-150. Tyr-272 serves as the catalytic Proton acceptor; specific for L-alanine. Met-320 is a substrate binding site.

Belongs to the alanine racemase family. Requires pyridoxal 5'-phosphate as cofactor.

The enzyme catalyses L-alanine = D-alanine. Functionally, isomerizes L-alanine to D-alanine which is then oxidized to pyruvate by DadA. The chain is Alanine racemase, catabolic (dadX) from Rhizobium johnstonii (strain DSM 114642 / LMG 32736 / 3841) (Rhizobium leguminosarum bv. viciae).